Consider the following 241-residue polypeptide: Small ribosomal subunit protein uS2 (241 aa).

Belongs to the universal ribosomal protein uS2 family.

This is Small ribosomal subunit protein uS2 from Hamiltonella defensa subsp. Acyrthosiphon pisum (strain 5AT).